The chain runs to 168 residues: Photosystem I assembly protein Ycf3 (168 aa).

3 TPR repeats span residues Ala35 to Pro68, Ser72 to Leu105, and Gly120 to Asn153.

Belongs to the Ycf3 family.

The protein resides in the plastid. It is found in the chloroplast thylakoid membrane. In terms of biological role, essential for the assembly of the photosystem I (PSI) complex. May act as a chaperone-like factor to guide the assembly of the PSI subunits. The sequence is that of Photosystem I assembly protein Ycf3 from Lemna minor (Common duckweed).